We begin with the raw amino-acid sequence, 116 residues long: Nitrogenase-stabilizing/protective protein NifW (116 aa).

This sequence belongs to the NifW family. Homotrimer; associates with NifD.

In terms of biological role, may protect the nitrogenase Fe-Mo protein from oxidative damage. This chain is Nitrogenase-stabilizing/protective protein NifW, found in Rhodopseudomonas palustris (strain ATCC BAA-98 / CGA009).